The following is an 825-amino-acid chain: Cytosolic phospholipase A2 delta (825 aa).

One can recognise a C2 domain in the interval 14 to 133; it reads SPERLHGHPY…LPGQLLQKTF (120 aa). Residues Asp47, Asp53, Asp103, Asp105, and Asp111 each contribute to the Ca(2+) site. A PLA2c domain is found at 281–825; it reads DCCPKELSVR…SETRPLGVKT (545 aa). Position 339–340 (339–340) interacts with substrate; that stretch reads GG. Ser370 serves as the catalytic Nucleophile. Asp654 serves as the catalytic Proton acceptor.

It depends on Ca(2+) as a cofactor. Weakly or not expressed in most tissues. Detected in placenta of 17.5 dpc embryos.

It localises to the cytoplasm. The protein localises to the cytosol. Its subcellular location is the membrane. It carries out the reaction a 1,2-diacyl-sn-glycero-3-phosphocholine + H2O = a 1-acyl-sn-glycero-3-phosphocholine + a fatty acid + H(+). The catalysed reaction is 1-hexadecanoyl-2-(5Z,8Z,11Z,14Z-eicosatetraenoyl)-sn-glycero-3-phosphocholine + H2O = 1-hexadecanoyl-sn-glycero-3-phosphocholine + (5Z,8Z,11Z,14Z)-eicosatetraenoate + H(+). The enzyme catalyses 1-hexadecanoyl-2-(9Z,12Z-octadecadienoyl)-sn-glycero-3-phosphocholine + H2O = (9Z,12Z)-octadecadienoate + 1-hexadecanoyl-sn-glycero-3-phosphocholine + H(+). It catalyses the reaction 1-hexadecanoyl-2-(9Z-octadecenoyl)-sn-glycero-3-phosphocholine + H2O = 1-hexadecanoyl-sn-glycero-3-phosphocholine + (9Z)-octadecenoate + H(+). It carries out the reaction 1-hexadecanoyl-2-(5Z,8Z,11Z,14Z-eicosatetraenoyl)-sn-glycero-3-phosphoethanolamine + H2O = 1-hexadecanoyl-sn-glycero-3-phosphoethanolamine + (5Z,8Z,11Z,14Z)-eicosatetraenoate + H(+). The catalysed reaction is 1-hexadecanoyl-2-(9Z,12Z-octadecadienoyl)-sn-glycero-3-phosphoethanolamine + H2O = 1-hexadecanoyl-sn-glycero-3-phosphoethanolamine + (9Z,12Z)-octadecadienoate + H(+). The enzyme catalyses 1-hexadecanoyl-sn-glycero-3-phosphocholine + H2O = sn-glycerol 3-phosphocholine + hexadecanoate + H(+). Its pathway is lipid metabolism; fatty acid metabolism. Stimulated by cytosolic Ca(2+). In terms of biological role, calcium-dependent phospholipase A2 that selectively hydrolyzes glycerophospholipids in the sn-2 position. Compared to its human ortholog, may have no preference for the fatty acid found at the sn-2 position. This is Cytosolic phospholipase A2 delta from Mus musculus (Mouse).